The primary structure comprises 151 residues: Large ribosomal subunit protein uL13 (151 aa).

The protein belongs to the universal ribosomal protein uL13 family. As to quaternary structure, part of the 50S ribosomal subunit.

In terms of biological role, this protein is one of the early assembly proteins of the 50S ribosomal subunit, although it is not seen to bind rRNA by itself. It is important during the early stages of 50S assembly. The chain is Large ribosomal subunit protein uL13 from Microchaete diplosiphon (Fremyella diplosiphon).